The primary structure comprises 515 residues: Cyclic AMP receptor-like protein G (515 aa).

At 1–16 (MSSIIFIPNDADNINS) the chain is on the extracellular side. A helical transmembrane segment spans residues 17–37 (IMVTISSSLSLVGCLFILSIY). At 38-50 (IYYKELREFQLKL) the chain is on the cytoplasmic side. The chain crosses the membrane as a helical span at residues 51-71 (IFIMTINDFIISIIFLIATHI). Topologically, residues 72–92 (QTKYFDAITNVFPFFCNFPDS) are extracellular. Residues 93–113 (LLHYFFLSSFFWEVCIAHTLI) traverse the membrane as a helical segment. Residues 114 to 129 (QVIKYNNDKVEDNLKK) are Cytoplasmic-facing. A helical transmembrane segment spans residues 130-150 (YFIFSNGLSALIMVSLFFIRS). The Extracellular segment spans residues 151-164 (YSKIDCHHDSIFPH). A helical transmembrane segment spans residues 165 to 185 (LLFFIPLLLTWIYNIIVCALL). At 186–276 (TKTFKEQAMN…IRKTPNIIWT (91 aa)) the chain is on the cytoplasmic side. Residues 277-297 (SIFFLFSFGFIWSWSILVIIL) traverse the membrane as a helical segment. Topologically, residues 298-306 (KYLSLDVKY) are extracellular. A helical transmembrane segment spans residues 307–327 (ILMISYFFIPLHGCMNAVCFG). Topologically, residues 328–515 (VNDRLRMNLK…FCTIDEDETK (188 aa)) are cytoplasmic. Over residues 362-375 (NGNNKNNKNNNGAN) the composition is skewed to low complexity. Disordered stretches follow at residues 362-409 (NGNN…YYQI) and 469-515 (NNNN…DETK). The segment covering 385 to 396 (SPDDDDDEDDDN) has biased composition (acidic residues). Low complexity-rich tracts occupy residues 397–407 (NNNNYSDGNYY) and 469–504 (NNNN…NNNN).

Belongs to the G-protein coupled receptor 5 family.

It is found in the membrane. Its function is as follows. Receptor for cAMP. The protein is Cyclic AMP receptor-like protein G (crlG) of Dictyostelium discoideum (Social amoeba).